The sequence spans 121 residues: RxLR effector protein PexRD2 (121 aa).

The N-terminal stretch at 1 to 20 (MRLSYVIVVIATSFLVTTEA) is a signal peptide. The RxLR-dEER motif lies at 38-56 (RLLRKHYTAAENDDDSEAR). The segment at 57-121 (ALNTEKMKTM…LNYVAEHTAV (65 aa)) is WY domain.

The protein belongs to the RxLR effector family. In terms of assembly, homodimer. Interacts with host MAPKKK epsilon (via its kinase domain).

It localises to the secreted. It is found in the host cytoplasm. The protein resides in the host nucleus. In terms of biological role, effector that enhances P.infestans colonization of Nicotiana benthamiana leaves. Induces a weak Cell death response in N.benthamiana. PexRD2-induced cell death is dependent on SGT1, suggesting that PexRD2 is recognized by the plant immune system. Interacts with the kinase domain of the host MAPKKK epsilon, a positive regulator of cell death associated with plant immunity, and perturbs signaling pathways triggered by MAPKKK epsilon. This is RxLR effector protein PexRD2 from Phytophthora infestans (strain T30-4) (Potato late blight agent).